The primary structure comprises 694 residues: Ferric reductase transmembrane component 5 (694 aa).

The N-terminal stretch at 1–19 (MLFARLVLLLVYLAPGSLA) is a signal peptide. At 20–163 (KPASTKKRTQ…LDNIDKGNVY (144 aa)) the chain is on the extracellular side. A glycan (N-linked (GlcNAc...) asparagine) is linked at Asn-117. Residues 164–184 (GVTICLYWIGVLFIAAVYHFL) form a helical membrane-spanning segment. Residues 185-222 (NFSRLKQTVFKNKVSAFLRGHYVLPALVHNHAMSVGRW) are Cytoplasmic-facing. A helical membrane pass occupies residues 223–243 (FFIGLVPTRLETLVLFGYVLL). The Extracellular portion of the chain corresponds to 244 to 267 (HGFLLSSYNFDHNELLSDRRSQVL). A helical membrane pass occupies residues 268 to 288 (IFLSDRAGILAFAHFPLIVLF). The Ferric oxidoreductase domain maps to 274 to 408 (AGILAFAHFP…GWGEWIMACA (135 aa)). Over 289–311 (GGKNSTMTWLTGIRYTAFITYHK) the chain is Cytoplasmic. The heme site is built by His-310 and His-324. The chain crosses the membrane as a helical span at residues 312–334 (WLGRFMLVDCTIHAIGYTYHAYI). Over 335-347 (ENYWKYVKYSDLW) the chain is Extracellular. The helical transmembrane segment at 348–368 (TSGRHAMIIVGILVFFSFFFF) threads the bilayer. Over 369-371 (RRH) the chain is Cytoplasmic. Residues 372-392 (YYELFVITHIILAIGFFHACW) form a helical membrane-spanning segment. Heme-binding residues include His-380 and His-394. Residues 393-403 (KHCYKLGWGEW) are Extracellular-facing. The helical transmembrane segment at 404 to 424 (IMACALFWIADRILRLIKIAI) threads the bilayer. One can recognise an FAD-binding FR-type domain in the interval 409-528 (LFWIADRILR…EGPYGQSTRT (120 aa)). Topologically, residues 425-694 (FGMPWAKLKL…IEYVEEFQNW (270 aa)) are cytoplasmic. 473–479 (HPFTVMD) provides a ligand contact to FAD. NADP(+) contacts are provided by residues 520-523 (GPYG) and 660-661 (CG).

Belongs to the ferric reductase (FRE) family. FAD is required as a cofactor.

It localises to the cell membrane. It carries out the reaction 2 a Fe(II)-siderophore + NADP(+) + H(+) = 2 a Fe(III)-siderophore + NADPH. Functionally, metalloreductase responsible for reducing extracellular iron and copper prior to import. Catalyzes the reductive uptake of Fe(3+)-salts and Fe(3+) bound to catecholate or hydroxamate siderophores. Fe(3+) is reduced to Fe(2+), which then dissociates from the siderophore and can be imported by the high-affinity Fe(2+) transport complex in the plasma membrane. This chain is Ferric reductase transmembrane component 5 (FRE5), found in Saccharomyces cerevisiae (strain ATCC 204508 / S288c) (Baker's yeast).